The sequence spans 84 residues: Toxin-like TcoNTxP1 (84 aa).

The N-terminal stretch at 1-19 is a signal peptide; that stretch reads MKRMILFTSCLLLIDIVVG. An LCN-type CS-alpha/beta domain is found at 21 to 82; the sequence is KEGYPADSKG…VWDSATNKCG (62 aa). Cystine bridges form between Cys31–Cys81, Cys35–Cys57, Cys43–Cys62, and Cys47–Cys64. Cys81 carries the cysteine amide modification. Residues 82–84 constitute a propeptide that is removed on maturation; sequence GKK.

Expressed by the venom gland.

It is found in the secreted. This protein is not toxic. It induces an immune response similar to that induced by whole venom. Thus, polyclonal antibodies raised against this protein can neutralize the effects of the venom. The chain is Toxin-like TcoNTxP1 from Tityus costatus (Brazilian scorpion).